Consider the following 506-residue polypeptide: Apolipoprotein N-acyltransferase (506 aa).

The next 6 helical transmembrane spans lie at 26-46 (FAPY…LILI), 66-86 (FASG…MPLA), 89-109 (LFLM…FTWS), 113-133 (FFAK…WLIA), 166-186 (GVEL…YAVI), and 192-212 (MLLI…WDWV). The CN hydrolase domain occupies 225-471 (IQGNVDQNLK…TAVLRAELTP (247 aa)). The active-site Proton acceptor is Glu264. Residue Lys330 is part of the active site. Cys382 acts as the Nucleophile in catalysis. A helical transmembrane segment spans residues 479–499 (HQLGSWPLYIWVALSLALAWW).

It belongs to the CN hydrolase family. Apolipoprotein N-acyltransferase subfamily.

The protein resides in the cell inner membrane. The enzyme catalyses N-terminal S-1,2-diacyl-sn-glyceryl-L-cysteinyl-[lipoprotein] + a glycerophospholipid = N-acyl-S-1,2-diacyl-sn-glyceryl-L-cysteinyl-[lipoprotein] + a 2-acyl-sn-glycero-3-phospholipid + H(+). It participates in protein modification; lipoprotein biosynthesis (N-acyl transfer). In terms of biological role, catalyzes the phospholipid dependent N-acylation of the N-terminal cysteine of apolipoprotein, the last step in lipoprotein maturation. This Vibrio vulnificus (strain CMCP6) protein is Apolipoprotein N-acyltransferase.